The primary structure comprises 204 residues: Rho GDP-dissociation inhibitor 1 (204 aa).

The segment at 1–36 (MAEQEPTAEQLAQIAAENEEDEHSVNYKPPAQKSIQ) is disordered. Alanine 2 bears the N-acetylalanine mark. Serine 34 is subject to Phosphoserine. The residue at position 43 (lysine 43) is an N6-acetyllysine. Phosphoserine is present on serine 47. Residues 66-83 (NVPNVVVTRLTLVCSTAP) are hydrophobic. Phosphoserine; by PKA is present on serine 101. Lysine 105 bears the N6-acetyllysine mark. At serine 115 the chain carries Phosphoserine; by PKC. Lysine 127 is modified (N6-acetyllysine). Glycyl lysine isopeptide (Lys-Gly) (interchain with G-Cter in SUMO1); alternate cross-links involve residues lysine 138 and lysine 141. Residues lysine 138 and lysine 141 each participate in a glycyl lysine isopeptide (Lys-Gly) (interchain with G-Cter in SUMO2); alternate cross-link. Lysine 141 carries the N6-acetyllysine; alternate modification. Lysine 141 bears the N6-succinyllysine; alternate mark. Lysine 178 carries the post-translational modification N6-acetyllysine.

Belongs to the Rho GDI family. As to quaternary structure, monomer. Interacts with FER. Interacts with PLXNB3. Forms a heterodimer with RAC1. Interacts with RHOA, the affinity is increased by three orders of magnitude when RHOA is prenylated. Interacts with PSMD10; the interaction increases ARHGDIA association with RHOA, leading to ARHGDIA-mediated inactivation of RHOA and ROCK and prolonged AKT activation. Interacts with KANK2; the interaction is direct and may regulate the interaction of ARHGDIA with RHOA, RAC1 and CDC42. Interacts with RHOC. Interacts with CDC42. Interacts with NGFR (via death domain); NGFR binding decreases the affinity for RHOA. Brain, lung, thymus, spleen, small intestine, and kidney, and weakly in heart and liver.

It localises to the cytoplasm. Its function is as follows. Controls Rho proteins homeostasis. Regulates the GDP/GTP exchange reaction of the Rho proteins by inhibiting the dissociation of GDP from them, and the subsequent binding of GTP to them. Retains Rho proteins such as CDC42, RAC1 and RHOA in an inactive cytosolic pool, regulating their stability and protecting them from degradation. Actively involved in the recycling and distribution of activated Rho GTPases in the cell, mediates extraction from membranes of both inactive and activated molecules due its exceptionally high affinity for prenylated forms. Through the modulation of Rho proteins, may play a role in cell motility regulation. In glioma cells, inhibits cell migration and invasion by mediating the signals of SEMA5A and PLXNB3 that lead to inactivation of RAC1. This chain is Rho GDP-dissociation inhibitor 1 (ARHGDIA), found in Bos taurus (Bovine).